A 382-amino-acid chain; its full sequence is Alanine racemase (382 aa).

The active-site Proton acceptor; specific for D-alanine is K37. K37 is modified (N6-(pyridoxal phosphate)lysine). R135 is a binding site for substrate. Y267 (proton acceptor; specific for L-alanine) is an active-site residue. M315 provides a ligand contact to substrate.

It belongs to the alanine racemase family. Requires pyridoxal 5'-phosphate as cofactor.

It catalyses the reaction L-alanine = D-alanine. The protein operates within amino-acid biosynthesis; D-alanine biosynthesis; D-alanine from L-alanine: step 1/1. In terms of biological role, catalyzes the interconversion of L-alanine and D-alanine. May also act on other amino acids. This Geobacter sulfurreducens (strain ATCC 51573 / DSM 12127 / PCA) protein is Alanine racemase (alr).